Here is a 413-residue protein sequence, read N- to C-terminus: Phosphoglycerate kinase (413 aa).

Substrate-binding positions include 24-26 (DFN), Arg39, 62-65 (HLSR), Arg123, and Arg165. ATP-binding positions include Lys216, Glu343, and 369–372 (GGDS).

It belongs to the phosphoglycerate kinase family. Monomer.

It is found in the cytoplasm. The catalysed reaction is (2R)-3-phosphoglycerate + ATP = (2R)-3-phospho-glyceroyl phosphate + ADP. The protein operates within carbohydrate degradation; glycolysis; pyruvate from D-glyceraldehyde 3-phosphate: step 2/5. In Mycoplasmoides gallisepticum (strain R(low / passage 15 / clone 2)) (Mycoplasma gallisepticum), this protein is Phosphoglycerate kinase.